We begin with the raw amino-acid sequence, 333 residues long: Threonine-phosphate decarboxylase (333 aa).

Residue lysine 199 is modified to N6-(pyridoxal phosphate)lysine.

This sequence belongs to the class-I pyridoxal-phosphate-dependent aminotransferase family. Homodimer. Requires pyridoxal 5'-phosphate as cofactor.

The protein localises to the cytoplasm. The enzyme catalyses O-phospho-L-threonine + H(+) = (R)-1-aminopropan-2-yl phosphate + CO2. It participates in cofactor biosynthesis; adenosylcobalamin biosynthesis. Functionally, decarboxylates L-threonine-O-3-phosphate to yield (R)-1-amino-2-propanol O-2-phosphate, the precursor for the linkage between the nucleotide loop and the corrin ring in cobalamin. This is Threonine-phosphate decarboxylase (cobC) from Sinorhizobium sp.